A 346-amino-acid polypeptide reads, in one-letter code: CLOCK-interacting pacemaker (346 aa).

Basic and acidic residues predominate over residues 1-42 (MEKNQKCATEQERFKARSGHGDGQRAEPRKTQTTTESDKDSG). Disordered regions lie at residues 1–83 (MEKN…SQPQ) and 167–228 (CARK…KELD). The span at 50 to 68 (CLSSVEQTDTEEGPTTSRW) shows a compositional bias: polar residues. Over residues 179–192 (NQTKRQCSKGHSGS) the composition is skewed to basic residues. Residues 205–222 (GVQQGPVDQNVKESSVSA) show a composition bias toward polar residues. The stretch at 283 to 315 (MKTKELARHNQATQSQLEKLQEQVQLYATAMSS) forms a coiled coil.

It is found in the nucleus. It localises to the cytoplasm. The protein resides in the cytosol. Functionally, transcriptional repressor which acts as a negative-feedback regulator of CLOCK-BMAL1 transcriptional activity in the circadian-clock mechanism. The physiological relevance of these observations is unsure. This is CLOCK-interacting pacemaker (cipc) from Xenopus laevis (African clawed frog).